A 296-amino-acid chain; its full sequence is 3-methyl-2-oxobutanoate hydroxymethyltransferase (296 aa).

Residues M1–P14 are compositionally biased toward low complexity. The tract at residues M1 to P29 is disordered. The Mg(2+) site is built by D71 and D114. Residues D71 to S72, D114, and K143 contribute to the 3-methyl-2-oxobutanoate site. Residue E145 coordinates Mg(2+). Catalysis depends on E212, which acts as the Proton acceptor.

This sequence belongs to the PanB family. As to quaternary structure, homodecamer; pentamer of dimers. Requires Mg(2+) as cofactor.

It is found in the cytoplasm. It carries out the reaction 3-methyl-2-oxobutanoate + (6R)-5,10-methylene-5,6,7,8-tetrahydrofolate + H2O = 2-dehydropantoate + (6S)-5,6,7,8-tetrahydrofolate. It functions in the pathway cofactor biosynthesis; (R)-pantothenate biosynthesis; (R)-pantoate from 3-methyl-2-oxobutanoate: step 1/2. Functionally, catalyzes the reversible reaction in which hydroxymethyl group from 5,10-methylenetetrahydrofolate is transferred onto alpha-ketoisovalerate to form ketopantoate. The chain is 3-methyl-2-oxobutanoate hydroxymethyltransferase from Paracidovorax citrulli (strain AAC00-1) (Acidovorax citrulli).